Here is a 163-residue protein sequence, read N- to C-terminus: 2-C-methyl-D-erythritol 2,4-cyclodiphosphate synthase (163 aa).

The a divalent metal cation site is built by Asp12 and His14. Residues 12–14 and 38–39 contribute to the 4-CDP-2-C-methyl-D-erythritol 2-phosphate site; these read DVH and HS. His46 is a binding site for a divalent metal cation. 4-CDP-2-C-methyl-D-erythritol 2-phosphate is bound by residues 60 to 62, 136 to 139, Phe143, and Arg146; these read DIG and TTSE.

It belongs to the IspF family. In terms of assembly, homotrimer. The cofactor is a divalent metal cation.

It carries out the reaction 4-CDP-2-C-methyl-D-erythritol 2-phosphate = 2-C-methyl-D-erythritol 2,4-cyclic diphosphate + CMP. It participates in isoprenoid biosynthesis; isopentenyl diphosphate biosynthesis via DXP pathway; isopentenyl diphosphate from 1-deoxy-D-xylulose 5-phosphate: step 4/6. In terms of biological role, involved in the biosynthesis of isopentenyl diphosphate (IPP) and dimethylallyl diphosphate (DMAPP), two major building blocks of isoprenoid compounds. Catalyzes the conversion of 4-diphosphocytidyl-2-C-methyl-D-erythritol 2-phosphate (CDP-ME2P) to 2-C-methyl-D-erythritol 2,4-cyclodiphosphate (ME-CPP) with a corresponding release of cytidine 5-monophosphate (CMP). In Xanthomonas campestris pv. campestris (strain 8004), this protein is 2-C-methyl-D-erythritol 2,4-cyclodiphosphate synthase.